The sequence spans 413 residues: MSAVMATYLLHDETDIRKKAEGIALGLTIGTWTDLPALEQEQLRKHKGEVVAIEELGESERVNAYFGKRLKRAIVKIAYPTVNFSADLPALLVTTFGKLSLDGEVRLLDLEFPDEWKRQFPGPRFGIDGIRDRVGVHNRPLLMSIFKGMIGRDLAYLTSELKKQALGGVDLVKDDEILFDSELLPFEKRITEGKAALQEVYEQTGKRTLYAVNLTGKTFALKDKAKRAAELGADVLLFNVFAYGLDVLQALREDEEIAVPIMAHPAFSGAVTPSEFYGVAPSLWLGKLLRLAGADFVLFPSPYGSVALEREQALGIARALTDDQEPFARAFPVPSAGIHPGLVPLIIRDFGLDTIVNAGGGIHGHPDGAIGGGRAFRAAIDAVLAGRPLRAAAAENEALQKAIDRWGVVEVEA.

K98 acts as the Proton acceptor in catalysis. Residues K147, 173–176, H264, G337, and 359–360 contribute to the substrate site; these read KDDE and GG. Mg(2+) contacts are provided by K173, D175, and E176. An N6-carboxylysine modification is found at K173.

Belongs to the RuBisCO large chain family. Type IV subfamily. As to quaternary structure, homodimer. It depends on Mg(2+) as a cofactor.

It catalyses the reaction 5-methylsulfanyl-2,3-dioxopentyl phosphate = 2-hydroxy-5-methylsulfanyl-3-oxopent-1-enyl phosphate. The protein operates within amino-acid biosynthesis; L-methionine biosynthesis via salvage pathway; L-methionine from S-methyl-5-thio-alpha-D-ribose 1-phosphate: step 3/6. Functionally, catalyzes the enolization of 2,3-diketo-5-methylthiopentyl-1-phosphate (DK-MTP-1-P) into 2-hydroxy-3-keto-5-methylthiopentenyl-1-phosphate (HK-MTPenyl-1-P). The polypeptide is 2,3-diketo-5-methylthiopentyl-1-phosphate enolase (mtnW) (Geobacillus kaustophilus (strain HTA426)).